A 261-amino-acid polypeptide reads, in one-letter code: Glucose 1-dehydrogenase (261 aa).

11–35 serves as a coordination point for NADP(+); the sequence is AITGAASGLGKAMAIRFGKEQAKVV. Ser145 contributes to the substrate binding site. Tyr158 acts as the Proton acceptor in catalysis.

This sequence belongs to the short-chain dehydrogenases/reductases (SDR) family. In terms of assembly, homotetramer.

It carries out the reaction D-glucose + NAD(+) = D-glucono-1,5-lactone + NADH + H(+). The catalysed reaction is D-glucose + NADP(+) = D-glucono-1,5-lactone + NADPH + H(+). The sequence is that of Glucose 1-dehydrogenase (gdh) from Bacillus subtilis (strain 168).